A 558-amino-acid polypeptide reads, in one-letter code: Protein NRT1/ PTR FAMILY 2.7 (558 aa).

Helical transmembrane passes span 31–51, 63–83, 90–110, 140–162, 178–198, 204–224, 319–339, 357–377, 399–419, 440–460, 479–499, and 518–538; these read FMIA…LNLI, IAAA…PAVA, FFGT…GVAL, LGVL…FTLA, FFNW…TAIV, ISWT…FLVF, IIPL…QLSL, IPAG…IIVN, VGIG…VEAK, VLWL…HFPG, SITS…IDLI, and VYWI…VCSW.

Belongs to the major facilitator superfamily. Proton-dependent oligopeptide transporter (POT/PTR) (TC 2.A.17) family. In terms of tissue distribution, expressed in shoots and in the cortex of mature roots. Not expressed in root tip meristematic cells.

Its subcellular location is the cell membrane. Transporter involved in a passive nitrate efflux. Not competent for chloride transport. This chain is Protein NRT1/ PTR FAMILY 2.7 (NPF2.7), found in Arabidopsis thaliana (Mouse-ear cress).